A 261-amino-acid chain; its full sequence is Na(+)-translocating NADH-quinone reductase subunit C (261 aa).

The chain crosses the membrane as a helical span at residues 12 to 32 (LGVVVGLSLVCSIIVSTAAVG). Thr-229 carries the post-translational modification FMN phosphoryl threonine.

Composed of six subunits; NqrA, NqrB, NqrC, NqrD, NqrE and NqrF. FMN is required as a cofactor.

It localises to the cell inner membrane. It catalyses the reaction a ubiquinone + n Na(+)(in) + NADH + H(+) = a ubiquinol + n Na(+)(out) + NAD(+). Functionally, NQR complex catalyzes the reduction of ubiquinone-1 to ubiquinol by two successive reactions, coupled with the transport of Na(+) ions from the cytoplasm to the periplasm. NqrA to NqrE are probably involved in the second step, the conversion of ubisemiquinone to ubiquinol. The chain is Na(+)-translocating NADH-quinone reductase subunit C from Vibrio campbellii (strain ATCC BAA-1116).